The sequence spans 283 residues: Diaminopimelate epimerase (283 aa).

Positions 13, 46, and 66 each coordinate substrate. The active-site Proton donor is Cys75. Residues 76 to 77 (GN), Asn166, Asn199, and 217 to 218 (ER) each bind substrate. The Proton acceptor role is filled by Cys226. Residue 227-228 (GT) coordinates substrate.

This sequence belongs to the diaminopimelate epimerase family. Homodimer.

The protein resides in the cytoplasm. It catalyses the reaction (2S,6S)-2,6-diaminopimelate = meso-2,6-diaminopimelate. It participates in amino-acid biosynthesis; L-lysine biosynthesis via DAP pathway; DL-2,6-diaminopimelate from LL-2,6-diaminopimelate: step 1/1. Catalyzes the stereoinversion of LL-2,6-diaminopimelate (L,L-DAP) to meso-diaminopimelate (meso-DAP), a precursor of L-lysine and an essential component of the bacterial peptidoglycan. The chain is Diaminopimelate epimerase from Herminiimonas arsenicoxydans.